Consider the following 147-residue polypeptide: MKLFELKPAPGAKKRPKRVGRGESSGHGKTSTRGHKGQWARSGGGVRPGFEGGQMPLTRRIPKRGFKNINKKVYTEVNVEKLERFENDTVITPELLLKEGVISKIEKDGVKVLGRGDLTKRLIVRVQKVSEGARKKIEAVGGKVEVI.

The tract at residues 1 to 58 is disordered; the sequence is MKLFELKPAPGAKKRPKRVGRGESSGHGKTSTRGHKGQWARSGGGVRPGFEGGQMPLT. The span at 42–52 shows a compositional bias: gly residues; sequence SGGGVRPGFEG.

This sequence belongs to the universal ribosomal protein uL15 family. In terms of assembly, part of the 50S ribosomal subunit.

Binds to the 23S rRNA. The sequence is that of Large ribosomal subunit protein uL15 from Caldicellulosiruptor saccharolyticus (strain ATCC 43494 / DSM 8903 / Tp8T 6331).